We begin with the raw amino-acid sequence, 877 residues long: Dolichyl-phosphate-mannose--protein mannosyltransferase 1 (877 aa).

Asn-83 carries an N-linked (GlcNAc...) asparagine glycan. 2 helical membrane passes run Phe-109–Gly-129 and Tyr-150–Leu-170. N-linked (GlcNAc...) asparagine glycosylation is present at Asn-195. The next 4 helical transmembrane spans lie at Val-196–Ile-216, Ile-226–Ala-246, Val-252–Ile-272, and Ile-291–Leu-311. Positions Thr-340–Tyr-394 constitute an MIR 1 domain. 2 N-linked (GlcNAc...) asparagine glycosylation sites follow: Asn-395 and Asn-400. MIR domains follow at residues Phe-403–Val-462 and Gln-472–Asn-528. 4 consecutive transmembrane segments (helical) span residues Thr-604 to Phe-624, Val-643 to Gly-663, Leu-666 to Phe-686, and Phe-700 to Val-720. Asn-721 is a glycosylation site (N-linked (GlcNAc...) asparagine). Residues Val-778–Gln-877 are disordered. Basic and acidic residues-rich tracts occupy residues Gln-783–Glu-799, Val-807–Val-816, and Asn-847–Gln-857.

It belongs to the glycosyltransferase 39 family. PMT1 and PMT2 form a functional heterodimer.

It is found in the endoplasmic reticulum membrane. It catalyses the reaction a di-trans,poly-cis-dolichyl beta-D-mannosyl phosphate + L-seryl-[protein] = 3-O-(alpha-D-mannosyl)-L-seryl-[protein] + a di-trans,poly-cis-dolichyl phosphate + H(+). The enzyme catalyses a di-trans,poly-cis-dolichyl beta-D-mannosyl phosphate + L-threonyl-[protein] = 3-O-(alpha-D-mannosyl)-L-threonyl-[protein] + a di-trans,poly-cis-dolichyl phosphate + H(+). It functions in the pathway protein modification; protein glycosylation. Protein mannosyltransferase (PMT) involved in hyphal growth and drug sensitivity. Transfers mannose from Dol-P-mannose to Ser or Thr residues on proteins. PMT1, PMT2 and PMT4 account for most of the protein-O-glycosylation activity, while PMT5 and PMT6 may specifically modulate a much narrower spectrum of target proteins. Accounts for the O-glycosylation of the cell wall proteins KRE9, PIR2, RHD3, and ALS1, as well as the SEC20 t-SNARE component. O-glycosylation of SEC20 is essential for its stability. Required for filamentation and early phases of biofilm formation. In Candida albicans (strain SC5314 / ATCC MYA-2876) (Yeast), this protein is Dolichyl-phosphate-mannose--protein mannosyltransferase 1 (PMT1).